A 253-amino-acid chain; its full sequence is FGFR1 oncogene partner 2 (253 aa).

Residues 5 to 104 (IEKALADAKA…SALELIMSKY (100 aa)) are a coiled coil. Ser141 carries the phosphoserine modification. Residues 160 to 223 (LERRHLEANQ…LREILQITRE (64 aa)) adopt a coiled-coil conformation. Residues 231–253 (DDASESTSLSALVTNSDLSLRKS) are disordered. The segment covering 235-253 (ESTSLSALVTNSDLSLRKS) has biased composition (polar residues).

Belongs to the SIKE family. In terms of tissue distribution, expressed in bone marrow, spleen and thymus.

It localises to the cytoplasm. In terms of biological role, may be involved in wound healing pathway. The polypeptide is FGFR1 oncogene partner 2 (FGFR1OP2) (Homo sapiens (Human)).